A 339-amino-acid chain; its full sequence is DNA-directed RNA polymerase subunit alpha (339 aa).

Residues 1 to 233 (MVREEVAGST…DLFLPFLHAE (233 aa)) form an alpha N-terminal domain (alpha-NTD) region. Residues 264–339 (KKGIPLNCIF…IDLLKNKLSF (76 aa)) are alpha C-terminal domain (alpha-CTD).

It belongs to the RNA polymerase alpha chain family. In terms of assembly, in plastids the minimal PEP RNA polymerase catalytic core is composed of four subunits: alpha, beta, beta', and beta''. When a (nuclear-encoded) sigma factor is associated with the core the holoenzyme is formed, which can initiate transcription.

It localises to the plastid. The protein localises to the chloroplast. It carries out the reaction RNA(n) + a ribonucleoside 5'-triphosphate = RNA(n+1) + diphosphate. DNA-dependent RNA polymerase catalyzes the transcription of DNA into RNA using the four ribonucleoside triphosphates as substrates. The protein is DNA-directed RNA polymerase subunit alpha of Eremopyrum distans.